An 81-amino-acid polypeptide reads, in one-letter code: MSNQFSEAQHQLDALGLRCPEPVMMVRKSVRKMAQGETLLIIADDPATTRDIPSFCEFMDHKLLASQTETTPYQYLIQKGL.

The active-site Cysteine persulfide intermediate is the Cys19.

The protein belongs to the sulfur carrier protein TusA family.

It is found in the cytoplasm. Its function is as follows. Sulfur carrier protein which probably makes part of a sulfur-relay system. This Shewanella woodyi (strain ATCC 51908 / MS32) protein is Sulfur carrier protein TusA.